A 920-amino-acid polypeptide reads, in one-letter code: Androgen receptor (920 aa).

A modulating region spans residues 1–559 (MEVQLGLGRV…IDYYFPPQKT (559 aa)). The interval 1-587 (MEVQLGLGRV…GSCKVFFKRA (587 aa)) is interaction with ZNF318. Disordered stretches follow at residues 36-167 (NPGP…LSLL) and 195-228 (QQQQQEAVSEGSSSGRAREASGAPTSSKDNYLGG). Positions 44–91 (AASAAPPGASLLLLQQQQQQQQQQQQQQQQQQQQQQQETSPRQQQQQQ) are enriched in low complexity. At S83 the chain carries Phosphoserine; by CDK9. The residue at position 96 (S96) is a Phosphoserine. Over residues 195-217 (QQQQQEAVSEGSSSGRAREASGA) the composition is skewed to low complexity. Positions 218-228 (PTSSKDNYLGG) are enriched in polar residues. Residue Y225 is modified to Phosphotyrosine; by CSK. S258 carries the phosphoserine modification. Y269 is subject to Phosphotyrosine; by CSK and TNK2. Phosphotyrosine; by CSK is present on residues Y309, Y348, Y359, and Y364. Phosphotyrosine; by CSK and TNK2 is present on Y365. K388 participates in a covalent cross-link: Glycyl lysine isopeptide (Lys-Gly) (interchain with G-Cter in SUMO). Y395 is subject to Phosphotyrosine; by CSK. A Glycyl lysine isopeptide (Lys-Gly) (interchain with G-Cter in SUMO) cross-link involves residue K521. Phosphotyrosine; by CSK is present on residues Y535 and Y552. The segment at 552-919 (YYFPPQKTCL…GKVKPIYFHT (368 aa)) is interaction with LPXN. 2 consecutive NR C4-type zinc fingers follow at residues 560–580 (CLICGDEASGCHYGALTCGSC) and 596–620 (CASRNDCTIDKFRRKNCPSCRLRKC). The segment at residues 560–632 (CLICGDEASG…AGMTLGARKL (73 aa)) is a DNA-binding region (nuclear receptor). The segment at 572 to 662 (YGALTCGSCK…TEETTQKLTV (91 aa)) is interaction with HIPK3. The segment at 592 to 919 (QKYLCASRND…GKVKPIYFHT (328 aa)) is interaction with CCAR1. Residues 625-919 (MTLGARKLKK…GKVKPIYFHT (295 aa)) are interaction with KAT7. S651 bears the Phosphoserine; by STK4/MST1 mark. In terms of domain architecture, NR LBD spans 669–900 (ECQPIFLNVL…DFPEMMAEII (232 aa)). 2 residues coordinate 17beta-hydroxy-5alpha-androstan-3-one: N706 and R753. Residues K846 and K848 each participate in a glycyl lysine isopeptide (Lys-Gly) (interchain with G-Cter in ubiquitin) cross-link. T878 contributes to the 17beta-hydroxy-5alpha-androstan-3-one binding site. At Y916 the chain carries Phosphotyrosine; by CSK.

It belongs to the nuclear hormone receptor family. NR3 subfamily. In terms of assembly, binds DNA as a homodimer. Part of a ternary complex containing AR, EFCAB6/DJBP and PARK7. Interacts with HIPK3 and NR0B2 in the presence of androgen. The ligand binding domain interacts with KAT7/HBO1 in the presence of dihydrotestosterone. Interacts with EFCAB6/DJBP, PQBP1, RANBP9, RBAK, SPDEF, SRA1, TGFB1I1 and RREB1. Interacts with ZMIZ1/ZIMP10 and ZMIZ2/ZMIP7 which both enhance its transactivation activity. Interacts with SLC30A9 and RAD54L2/ARIP4. Interacts with MACROD1 (via macro domain). Interacts via the ligand-binding domain with LXXLL and FXXLF motifs from NCOA1, NCOA2, NCOA3 and MAGEA11. Interacts (via nuclear receptor DNA binding domain and nuclear receptor ligand binding domain) with NCOA4. The AR N-terminal poly-Gln region binds Ran resulting in enhancement of AR-mediated transactivation. Ran-binding decreases as the poly-Gln length increases. Interacts with HIP1 (via coiled coil domain). Interacts (via ligand-binding domain) with TRIM68. Interacts with TNK2. Interacts with USP26. Interacts with RNF6. Interacts (regulated by RNF6 probably through polyubiquitination) with RNF14; regulates AR transcriptional activity. Interacts with PRMT2 and TRIM24. Interacts with RACK1. Interacts with RANBP10; this interaction enhances dihydrotestosterone-induced AR transcriptional activity. Interacts with PRPF6 in a hormone-independent way; this interaction enhances dihydrotestosterone-induced AR transcriptional activity. Interacts with STK4/MST1. Interacts with ZIPK/DAPK3. Interacts with LPXN. Interacts with MAK. Part of a complex containing AR, MAK and NCOA3. Interacts with CRY1. Interacts with CCAR1 and GATA2. Interacts with ZNF318. Interacts with BUD31. Interacts with ARID4A. Interacts with ARID4B. Interacts (via NR LBD domain) with ZBTB7A; the interaction is direct and androgen-dependent. Interacts with NCOR1. Interacts with NCOR2. Interacts with CRY2 in a ligand-dependent manner. Post-translationally, sumoylated on Lys-388 (major) and Lys-521. Ubiquitinated. Deubiquitinated by USP26. 'Lys-6' and 'Lys-27'-linked polyubiquitination by RNF6 modulates AR transcriptional activity and specificity. In terms of processing, phosphorylated in prostate cancer cells in response to several growth factors including EGF. Phosphorylation is induced by c-Src kinase (CSK). Tyr-535 is one of the major phosphorylation sites and an increase in phosphorylation and Src kinase activity is associated with prostate cancer progression. Phosphorylation by TNK2 enhances the DNA-binding and transcriptional activity and may be responsible for androgen-independent progression of prostate cancer. Phosphorylation at Ser-83 by CDK9 regulates AR promoter selectivity and cell growth. Phosphorylation by PAK6 leads to AR-mediated transcription inhibition. Palmitoylated by ZDHHC7 and ZDHHC21. Palmitoylation is required for plasma membrane targeting and for rapid intracellular signaling via ERK and AKT kinases and cAMP generation. Mainly expressed in heart and skeletal muscle. In terms of tissue distribution, expressed in basal and stromal cells of the prostate (at protein level).

The protein resides in the nucleus. Its subcellular location is the cytoplasm. AIM-100 (4-amino-5,6-biaryl-furo[2,3-d]pyrimidine) suppresses TNK2-mediated phosphorylation at Tyr-269. Inhibits the binding of the Tyr-269 phosphorylated form to androgen-responsive enhancers (AREs) and its transcriptional activity. Its function is as follows. Steroid hormone receptors are ligand-activated transcription factors that regulate eukaryotic gene expression and affect cellular proliferation and differentiation in target tissues. Transcription factor activity is modulated by bound coactivator and corepressor proteins like ZBTB7A that recruits NCOR1 and NCOR2 to the androgen response elements/ARE on target genes, negatively regulating androgen receptor signaling and androgen-induced cell proliferation. Transcription activation is also down-regulated by NR0B2. Activated, but not phosphorylated, by HIPK3 and ZIPK/DAPK3. In terms of biological role, lacks the C-terminal ligand-binding domain and may therefore constitutively activate the transcription of a specific set of genes independently of steroid hormones. This is Androgen receptor (AR) from Homo sapiens (Human).